The sequence spans 181 residues: Malignant T-cell-amplified sequence 2 (181 aa).

The region spanning 92–171 (LPHQQVDKGA…IGIENIHYLN (80 aa)) is the PUA domain.

It belongs to the MCTS1 family.

Its subcellular location is the cytoplasm. The chain is Malignant T-cell-amplified sequence 2 from Mus musculus (Mouse).